The primary structure comprises 338 residues: Sporulation-specific protein 4 (338 aa).

The segment at 14-37 is disordered; sequence QEENKNFLHKNTNEPNEMEQSQTQ. Positions 22 to 37 are enriched in polar residues; the sequence is HKNTNEPNEMEQSQTQ.

Its function is as follows. Not essential for sporulation. Might be a component of the cell wall. The protein is Sporulation-specific protein 4 (SPS4) of Saccharomyces cerevisiae (strain ATCC 204508 / S288c) (Baker's yeast).